We begin with the raw amino-acid sequence, 2381 residues long: Highly reducing polyketide synthase virA (2381 aa).

In terms of domain architecture, Ketosynthase family 3 (KS3) spans M1–S420. Active-site for beta-ketoacyl synthase activity residues include C171, H306, and H344. The malonyl-CoA:ACP transacylase (MAT) domain stretch occupies residues V535–E851. S629 acts as the For malonyltransferase activity in catalysis. The N-terminal hotdog fold stretch occupies residues H920 to L1064. A dehydratase (DH) domain region spans residues H920–K1232. A PKS/mFAS DH domain is found at H920–V1235. H952 serves as the catalytic Proton acceptor; for dehydratase activity. The tract at residues H1078–V1235 is C-terminal hotdog fold. The active-site Proton donor; for dehydratase activity is the D1144. The tract at residues G1639 to V1956 is enoyl reductase (ER) domain. The ketoreductase (KR) domain stretch occupies residues T1981–S2159. Residues T2297 to L2375 form the Carrier domain. Residue S2334 is modified to O-(pantetheine 4'-phosphoryl)serine.

The protein operates within secondary metabolite biosynthesis. Highly reducing polyketide synthase; part of the gene cluster that mediates the biosynthesis of virensols and trichoxide, fungal natural products that contain or are derived from a salicylaldehyde core. The pathway begins with the synthesis of the reduced chain in virensol C by the highly reducing polyketide synthase virA via condensation of one acetate and 8 malonate units. VirA has interesting programming rules since the first 2 ketides are fully reduced, the 3 following ketides undergo beta-dehydration, and the last 3 ketides are only reduced to beta-hydroxys to yield the trihydroxy portion. The production of aldehyde virensol C by virA alone is surprising, since virA does not contain a reductase (R) domain that is typically associated with reductive product release in HRPKS. The cupin-domain enzyme virC is involved in enhancing virA product turnover. The short-chain dehydrogenase virB then oxidizes the C-7 alcohol of virensol C to a ketone, yielding virensol D. Virensol D is further transformed to salicylaldehyde 5-deoxyaurocitrin by the short-chain dehydrogenase virD. VirD catalyzes the dehydrogenation of C-3 to form the beta-ketone aldehyde, which is followed by the generation of the nucleophilic C-2 that is required for the intramolecular aldol condensation between C-2 and C-7, itself followed by dehydration and aromatization which leads to salicylaldehyde 5-deoxyaurocitrin. While the dehydrogenation of virensol D is definitely catalyzed by virD, the aldol condensation and dehydration may be uncatalyzed or assisted by virD. The short chain dehydrogenase virG then converts salicylaldehyde 5-deoxyaurocitrin into virensol B which is further hydroxylated by the cytochrome P450 monooxygenase virE to yield the hydroquinone virensol A. VirI then may oxidize virensol A to form the quinone, while virH performs the epoxidation. Finally, the two remaining short-chain dehydrogenases, virK and virL, are probably responsible for reducing the ketones to the corresponding alcohols to furnish the epoxycyclohexanol structure in trichoxide. The polypeptide is Highly reducing polyketide synthase virA (Hypocrea virens (strain Gv29-8 / FGSC 10586) (Gliocladium virens)).